The primary structure comprises 418 residues: Tektin-1 (418 aa).

Coiled-coil stretches lie at residues 21-84, 268-308, and 336-383; these read KNQY…LEQL, LKET…DQEG, and RLIK…ENTI. Positions 399-418 are disordered; the sequence is PRDGDDHGEWAGGSHPEAVC.

The protein belongs to the tektin family. As to quaternary structure, microtubule inner protein component of sperm flagellar doublet microtubules. Post-translationally, ubiquitinated, leading to its degradation. Deubiquitinated by USP16, promoting its stability. Expressed in trachea multiciliated cells.

Its subcellular location is the cytoplasm. The protein resides in the cytoskeleton. It is found in the cilium axoneme. It localises to the flagellum axoneme. Microtubule inner protein (MIP) part of the dynein-decorated doublet microtubules (DMTs) in cilia and flagellar axoneme. Forms filamentous polymers in the walls of ciliary and flagellar microtubules. The polypeptide is Tektin-1 (TEKT1) (Bos taurus (Bovine)).